The chain runs to 469 residues: Origin recognition complex subunit 6 (469 aa).

2 stretches are compositionally biased toward low complexity: residues 218-234 (SSTLNNTTTSTTTTAPK) and 275-308 (ATPTLSSSSSSSSSSSSSLSPPLSSNPTTDLSST). Disordered regions lie at residues 218–241 (SSTLNNTTTSTTTTAPKSPIPIPS), 275–309 (ATPTLSSSSSSSSSSSSSLSPPLSSNPTTDLSSTN), 356–423 (ESPF…EGDL), and 436–469 (KEQQFNDWKNSDFAKSKPTPVNATKQLTLDSFFK). 2 stretches are compositionally biased toward basic and acidic residues: residues 380 to 390 (SRDELEKESEL) and 409 to 423 (QKEKSVKNKINEGDL). Positions 454–469 (TPVNATKQLTLDSFFK) are enriched in polar residues.

This sequence belongs to the ORC6 family. ORC is composed of six subunits.

Its subcellular location is the nucleus. In terms of biological role, component of the origin recognition complex (ORC) that binds origins of replication. DNA-binding is ATP-dependent, however specific DNA sequences that define origins of replication have not been identified so far. ORC is required to assemble the pre-replication complex necessary to initiate DNA replication. The sequence is that of Origin recognition complex subunit 6 (orcF) from Dictyostelium discoideum (Social amoeba).